Consider the following 299-residue polypeptide: Probable 4-deoxy-4-formamido-L-arabinose-phosphoundecaprenol deformylase ArnD (299 aa).

A NodB homology domain is found at 2–263 (IDVGLRIDVD…EASARGIRFV (262 aa)).

The protein belongs to the polysaccharide deacetylase family. ArnD deformylase subfamily.

The catalysed reaction is 4-deoxy-4-formamido-alpha-L-arabinopyranosyl di-trans,octa-cis-undecaprenyl phosphate + H2O = 4-amino-4-deoxy-alpha-L-arabinopyranosyl di-trans,octa-cis-undecaprenyl phosphate + formate. It functions in the pathway glycolipid biosynthesis; 4-amino-4-deoxy-alpha-L-arabinose undecaprenyl phosphate biosynthesis; 4-amino-4-deoxy-alpha-L-arabinose undecaprenyl phosphate from UDP-4-deoxy-4-formamido-beta-L-arabinose and undecaprenyl phosphate: step 2/2. It participates in bacterial outer membrane biogenesis; lipopolysaccharide biosynthesis. In terms of biological role, catalyzes the deformylation of 4-deoxy-4-formamido-L-arabinose-phosphoundecaprenol to 4-amino-4-deoxy-L-arabinose-phosphoundecaprenol. The modified arabinose is attached to lipid A and is required for resistance to polymyxin and cationic antimicrobial peptides. The sequence is that of Probable 4-deoxy-4-formamido-L-arabinose-phosphoundecaprenol deformylase ArnD from Aeromonas salmonicida (strain A449).